Here is a 339-residue protein sequence, read N- to C-terminus: Anthranilate phosphoribosyltransferase (339 aa).

5-phospho-alpha-D-ribose 1-diphosphate contacts are provided by residues Gly-80, 83-84 (GD), Thr-88, 90-93 (NIST), 108-116 (KHGNRAMSS), and Ser-120. Gly-80 is an anthranilate binding site. Ser-92 is a Mg(2+) binding site. Asn-111 contributes to the anthranilate binding site. Arg-166 contacts anthranilate. Mg(2+)-binding residues include Asp-225 and Glu-226.

This sequence belongs to the anthranilate phosphoribosyltransferase family. Homodimer. The cofactor is Mg(2+).

The enzyme catalyses N-(5-phospho-beta-D-ribosyl)anthranilate + diphosphate = 5-phospho-alpha-D-ribose 1-diphosphate + anthranilate. Its pathway is amino-acid biosynthesis; L-tryptophan biosynthesis; L-tryptophan from chorismate: step 2/5. In terms of biological role, catalyzes the transfer of the phosphoribosyl group of 5-phosphorylribose-1-pyrophosphate (PRPP) to anthranilate to yield N-(5'-phosphoribosyl)-anthranilate (PRA). The polypeptide is Anthranilate phosphoribosyltransferase (Chloroflexus aurantiacus (strain ATCC 29366 / DSM 635 / J-10-fl)).